Here is a 309-residue protein sequence, read N- to C-terminus: Lactamase-like protein aptB (309 aa).

The Zn(2+) site is built by His97, His99, Asp101, and His102. Catalysis depends on Asp101, which acts as the Proton donor/acceptor.

The protein belongs to the metallo-beta-lactamase superfamily. Requires Zn(2+) as cofactor.

The catalysed reaction is 2,3,6,8,9-pentahydroxy-1-oxo-3-(2-oxopropyl)-1,2,3,4-tetrahydroanthracene-2-carboxyl-[ACP] + H2O = 2,3,6,8,9-pentahydroxy-1-oxo-3-(2-oxopropyl)-1,2,3,4-tetrahydroanthracene-2-carboxylate + holo-[ACP] + H(+). Its pathway is secondary metabolite biosynthesis. Lactamase-like protein; part of the gene cluster that mediates the biosynthesis of asperthecin, an anthraquinone pigment. Polyketide synthase (PKS) aptA catalyzes the formation of the aromatic polyketide from acetyl coenzyme A and seven malonyl coenzyme A molecules. Polyketide is subsequently hydrolyzed by the action of aptB into endocrocin-9-anthrone. Endocrocin-9-anthrone is then oxidized into endocrocin by aptC. Endocrocin is likely to decarboxylate spontaneously to form emodin which explains why there is no decarboxylase in the asperthecin biosynthesis cluster. Finally, aptC or another endogenous oxygenase catalyzes additional oxidation steps to form asperthecin. This chain is Lactamase-like protein aptB, found in Emericella nidulans (strain FGSC A4 / ATCC 38163 / CBS 112.46 / NRRL 194 / M139) (Aspergillus nidulans).